Consider the following 279-residue polypeptide: Thymidylate synthase (279 aa).

DUMP is bound at residue R21. H51 contacts (6R)-5,10-methylene-5,6,7,8-tetrahydrofolate. 126 to 127 provides a ligand contact to dUMP; that stretch reads RR. Catalysis depends on C159, which acts as the Nucleophile. DUMP contacts are provided by residues 179–182, N190, and 220–222; these read RSAD and HLY. A (6R)-5,10-methylene-5,6,7,8-tetrahydrofolate-binding site is contributed by D182. Position 278 (A278) interacts with (6R)-5,10-methylene-5,6,7,8-tetrahydrofolate.

This sequence belongs to the thymidylate synthase family. Bacterial-type ThyA subfamily. As to quaternary structure, homodimer.

Its subcellular location is the cytoplasm. The enzyme catalyses dUMP + (6R)-5,10-methylene-5,6,7,8-tetrahydrofolate = 7,8-dihydrofolate + dTMP. The protein operates within pyrimidine metabolism; dTTP biosynthesis. Catalyzes the reductive methylation of 2'-deoxyuridine-5'-monophosphate (dUMP) to 2'-deoxythymidine-5'-monophosphate (dTMP) while utilizing 5,10-methylenetetrahydrofolate (mTHF) as the methyl donor and reductant in the reaction, yielding dihydrofolate (DHF) as a by-product. This enzymatic reaction provides an intracellular de novo source of dTMP, an essential precursor for DNA biosynthesis. The chain is Thymidylate synthase from Marinobacter nauticus (strain ATCC 700491 / DSM 11845 / VT8) (Marinobacter aquaeolei).